We begin with the raw amino-acid sequence, 587 residues long: Prolycopene isomerase 2, chloroplastic (587 aa).

The N-terminal 50 residues, 1 to 50 (MLCLSLNSSSTSPPKLPLHHSFSRRGIRSWVRSPCVQRKKLGFWSSPKAV), are a transit peptide targeting the chloroplast.

The protein belongs to the carotenoid/retinoid oxidoreductase family. CrtISO subfamily. NAD(+) is required as a cofactor. Requires NADP(+) as cofactor. It depends on FAD as a cofactor. In terms of tissue distribution, up-regulated in the flower buds and flower lip tissue, while it is weakly expressed in leaves.

The protein resides in the plastid. It localises to the chloroplast membrane. The enzyme catalyses 7,7',9,9'-tetra-cis-lycopene = all-trans-lycopene. The protein operates within carotenoid biosynthesis; lycopene biosynthesis. Its function is as follows. Carotene cis-trans-isomerase that converts 7,9,9'-tri-cis-neurosporene to 9'-cis-neurosporene and 7,9,9',7'-tetra-cis-lycopene (also known as prolycopene) into all-trans-lycopene. Isomerization requires redox-active components, suggesting that isomerization is achieved by a reversible redox reaction acting at specific double bonds. Isomerizes adjacent cis-double bonds at C7 and C9 pairwise into the trans-configuration, but is incapable of isomerizing single cis-double bonds at C9 and C9'. The protein is Prolycopene isomerase 2, chloroplastic (CRTISO2) of Oncidium hybrid cultivar (Orchid).